The chain runs to 263 residues: Small ribosomal subunit protein eS4, Y isoform 1 (263 aa).

The region spanning 42-104 (LPLIIFLRNR…TGEHFRLVYD (63 aa)) is the S4 RNA-binding domain.

This sequence belongs to the eukaryotic ribosomal protein eS4 family.

The protein is Small ribosomal subunit protein eS4, Y isoform 1 (RPS4Y1) of Macaca fuscata fuscata (Japanese macaque).